The primary structure comprises 187 residues: MALPCSFSVALVLLSCHSLCCLACHLPDTHSLRNWRVLTLLGQMRRLSASSCDHYTTDFAFPKELFDGQRLQEAQALSVVHVMTQKVFHLFCTNTSSAPWNMTLLEELCSGLSEQLDDLDACPLQEAGLAETPLMHEDSTLRTYFQRISLYLQDRNHSPCAWEMVRAEIGRSFFSLTILQERVRRRK.

An N-terminal signal peptide occupies residues 1–23; the sequence is MALPCSFSVALVLLSCHSLCCLA. Disulfide bonds link Cys24–Cys122 and Cys52–Cys160. N-linked (GlcNAc...) asparagine glycans are attached at residues Asn94 and Asn101.

Belongs to the alpha/beta interferon family.

The protein localises to the secreted. Its function is as follows. Produced by macrophages, IFN-alpha have antiviral activities. Interferon stimulates the production of two enzymes: a protein kinase and an oligoadenylate synthetase. The polypeptide is Interferon alpha-3 (Canis lupus familiaris (Dog)).